A 65-amino-acid chain; its full sequence is Conotoxin VnMLCL-031 (65 aa).

Positions 1–19 are cleaved as a signal peptide; that stretch reads MLCLPXFIILLLLASPAAP. Residues 20–43 constitute a propeptide that is removed on maturation; sequence NPLQTRXQSNLIRAGPEDANIKTX. At Ile-64 the chain carries Isoleucine amide.

Belongs to the conotoxin T superfamily. In terms of tissue distribution, expressed by the venom duct.

It localises to the secreted. This chain is Conotoxin VnMLCL-031, found in Conus ventricosus (Mediterranean cone).